The following is a 393-amino-acid chain: Tryptophan synthase beta chain (393 aa).

Residue K85 is modified to N6-(pyridoxal phosphate)lysine.

Belongs to the TrpB family. In terms of assembly, tetramer of two alpha and two beta chains. Requires pyridoxal 5'-phosphate as cofactor.

It catalyses the reaction (1S,2R)-1-C-(indol-3-yl)glycerol 3-phosphate + L-serine = D-glyceraldehyde 3-phosphate + L-tryptophan + H2O. The protein operates within amino-acid biosynthesis; L-tryptophan biosynthesis; L-tryptophan from chorismate: step 5/5. The beta subunit is responsible for the synthesis of L-tryptophan from indole and L-serine. This Helicobacter pylori (strain ATCC 700392 / 26695) (Campylobacter pylori) protein is Tryptophan synthase beta chain (trpB).